A 498-amino-acid chain; its full sequence is ATP synthase subunit beta, chloroplastic (498 aa).

Residue 172 to 179 coordinates ATP; it reads GGAGVGKT.

This sequence belongs to the ATPase alpha/beta chains family. F-type ATPases have 2 components, CF(1) - the catalytic core - and CF(0) - the membrane proton channel. CF(1) has five subunits: alpha(3), beta(3), gamma(1), delta(1), epsilon(1). CF(0) has four main subunits: a(1), b(1), b'(1) and c(9-12).

It is found in the plastid. The protein localises to the chloroplast thylakoid membrane. The catalysed reaction is ATP + H2O + 4 H(+)(in) = ADP + phosphate + 5 H(+)(out). Functionally, produces ATP from ADP in the presence of a proton gradient across the membrane. The catalytic sites are hosted primarily by the beta subunits. This is ATP synthase subunit beta, chloroplastic from Chamaerops humilis (Mediterranean fan palm).